Reading from the N-terminus, the 606-residue chain is Melanoma-associated antigen D2 (606 aa).

The disordered stretch occupies residues Met1–Arg204. Ser2 carries the N-acetylserine modification. A Phosphoserine modification is found at Ser5. A compositionally biased stretch (polar residues) spans Ser24 to Val37. Thr72 is subject to Phosphothreonine. Over residues Thr81–Gln93 the composition is skewed to polar residues. Positions Glu122–Asp131 are enriched in basic and acidic residues. Residues Glu142–Glu164 show a composition bias toward low complexity. Ser157 is modified (phosphoserine). A compositionally biased stretch (basic residues) spans Lys171 to Lys181. Ser190, Ser191, Ser194, Ser197, Ser244, and Ser247 each carry phosphoserine. A compositionally biased stretch (basic residues) spans Pro248–Ala260. The interval Pro248–Asp275 is disordered. 2 positions are modified to phosphoserine: Ser264 and Ser265. The MAGE domain maps to Leu279–Ala478. The segment at Gly534–Ala563 is disordered.

As to quaternary structure, interacts with GNAS. May interact with DNAJB1. Widely expressed. In the developing and adult kidney, expressed in the thick ascending limb of the loop of Henle and the distal convoluted tubules outside the loop.

Functionally, regulates the expression, localization to the plasma membrane and function of the sodium chloride cotransporters SLC12A1 and SLC12A3, two key components of salt reabsorption in the distal renal tubule. In Homo sapiens (Human), this protein is Melanoma-associated antigen D2 (MAGED2).